Here is a 176-residue protein sequence, read N- to C-terminus: N-alpha-acetyltransferase NAT5 (176 aa).

The N-acetyltransferase domain occupies 14–176; that stretch reads NNLGMLTKLA…DAILLKKHIS (163 aa).

It belongs to the acetyltransferase family. As to quaternary structure, component of the N-terminal acetyltransferase A (NatA) complex, which is composed of ARD1, NAT1 and NAT5.

It localises to the cytoplasm. The catalysed reaction is N-terminal L-methionyl-L-alanyl-[protein] + acetyl-CoA = N-terminal N(alpha)-acetyl-L-methionyl-L-alanyl-[protein] + CoA + H(+). It catalyses the reaction N-terminal L-methionyl-L-seryl-[protein] + acetyl-CoA = N-terminal N(alpha)-acetyl-L-methionyl-L-seryl-[protein] + CoA + H(+). It carries out the reaction N-terminal L-methionyl-L-valyl-[protein] + acetyl-CoA = N-terminal N(alpha)-acetyl-L-methionyl-L-valyl-[protein] + CoA + H(+). The enzyme catalyses N-terminal L-methionyl-L-threonyl-[protein] + acetyl-CoA = N-terminal N(alpha)-acetyl-L-methionyl-L-threonyl-[protein] + CoA + H(+). The catalysed reaction is N-terminal L-methionyl-L-lysyl-[protein] + acetyl-CoA = N-terminal N(alpha)-acetyl-L-methionyl-L-lysyl-[protein] + CoA + H(+). It catalyses the reaction N-terminal L-methionyl-L-leucyl-[protein] + acetyl-CoA = N-terminal N(alpha)-acetyl-L-methionyl-L-leucyl-[protein] + CoA + H(+). It carries out the reaction N-terminal L-methionyl-L-phenylalanyl-[protein] + acetyl-CoA = N-terminal N(alpha)-acetyl-L-methionyl-L-phenylalanyl-[protein] + CoA + H(+). The enzyme catalyses N-terminal L-methionyl-L-tyrosyl-[protein] + acetyl-CoA = N-terminal N(alpha)-acetyl-L-methionyl-L-tyrosyl-[protein] + CoA + H(+). Its function is as follows. N-alpha-acetyltransferase that acetylates the N-terminus of proteins that retain their initiating methionine. Has a broad substrate specificity: able to acetylate the initiator methionine of most peptides. Non-essential component of the NatA N-terminal acetyltransferase. In Saccharomyces cerevisiae (strain ATCC 204508 / S288c) (Baker's yeast), this protein is N-alpha-acetyltransferase NAT5.